The following is a 316-amino-acid chain: Sorting nexin-20 (316 aa).

Residues 1-57 are disordered; that stretch reads MASHKHPGSPGWTGPICQDMAGTTPKASAPRPDLPRPGPEDHLEAQGSPSSNSSMTT. Serine 3 carries the post-translational modification Phosphoserine. Residues 47 to 57 show a composition bias toward polar residues; the sequence is GSPSSNSSMTT. The 118-residue stretch at 74–191 folds into the PX domain; it reads VKLLFEIASA…DFLTRPELKE (118 aa). A 1,2-diacyl-sn-glycero-3-phospho-(1D-myo-inositol-3-phosphate) contacts are provided by arginine 116, serine 118, lysine 143, and arginine 157.

It belongs to the sorting nexin family. Interacts with SELPLG. Interaction with SELPLG is controversial.

Its subcellular location is the early endosome membrane. It is found in the cell membrane. It localises to the cytoplasm. The protein localises to the nucleus. Functionally, may play a role in cellular vesicle trafficking. Has been proposed to function as a sorting protein that targets SELPLG into endosomes, but has no effect on SELPLG internalization from the cell surface, or on SELPLG-mediated cell-cell adhesion. This is Sorting nexin-20 (SNX20) from Bos taurus (Bovine).